The sequence spans 161 residues: Phosphopantetheine adenylyltransferase (161 aa).

Thr9 contributes to the substrate binding site. Residues Thr9–Phe10 and His17 each bind ATP. 3 residues coordinate substrate: Lys41, Leu73, and Arg87. ATP is bound by residues Gly88 to Arg90, Glu98, and Tyr123 to Thr129.

The protein belongs to the bacterial CoaD family. Homohexamer. Mg(2+) serves as cofactor.

It is found in the cytoplasm. The catalysed reaction is (R)-4'-phosphopantetheine + ATP + H(+) = 3'-dephospho-CoA + diphosphate. It participates in cofactor biosynthesis; coenzyme A biosynthesis; CoA from (R)-pantothenate: step 4/5. Reversibly transfers an adenylyl group from ATP to 4'-phosphopantetheine, yielding dephospho-CoA (dPCoA) and pyrophosphate. The protein is Phosphopantetheine adenylyltransferase of Janthinobacterium sp. (strain Marseille) (Minibacterium massiliensis).